Here is a 33-residue protein sequence, read N- to C-terminus: Beta-amanitin proprotein (33 aa).

A propeptide spanning residues 1–10 (MSDINATRLP) is cleaved from the precursor. Positions 11–18 (IWGIGCDP) form a cross-link, cyclopeptide (Ile-Pro). Positions 12–16 (WGIGC) form a cross-link, 2'-cysteinyl-6'-hydroxytryptophan sulfoxide (Trp-Cys). The propeptide occupies 19 to 33 (CVGDDVAALTTRGEA).

This sequence belongs to the MSDIN fungal toxin family. In terms of processing, processed by the macrocyclase-peptidase enzyme POPB to yield a toxic cyclic decapeptide. POPB first removes 10 residues from the N-terminus. Conformational trapping of the remaining peptide forces the enzyme to release this intermediate rather than proceed to macrocyclization. The enzyme rebinds the remaining peptide in a different conformation and catalyzes macrocyclization of the N-terminal 8 residues.

Toxin belonging to the bicyclic octapeptides amatoxins that acts by binding non-competitively to RNA polymerase II and greatly slowing the elongation of transcripts from target promoters. This is Beta-amanitin proprotein from Amanita rimosa.